The following is a 357-amino-acid chain: Uroporphyrinogen decarboxylase (357 aa).

Residues 27–31, Asp-77, Tyr-154, Thr-209, and His-327 contribute to the substrate site; that span reads RQAGR.

This sequence belongs to the uroporphyrinogen decarboxylase family. Homodimer.

The protein resides in the cytoplasm. The catalysed reaction is uroporphyrinogen III + 4 H(+) = coproporphyrinogen III + 4 CO2. Its pathway is porphyrin-containing compound metabolism; protoporphyrin-IX biosynthesis; coproporphyrinogen-III from 5-aminolevulinate: step 4/4. In terms of biological role, catalyzes the decarboxylation of four acetate groups of uroporphyrinogen-III to yield coproporphyrinogen-III. This is Uroporphyrinogen decarboxylase from Proteus mirabilis (strain HI4320).